The chain runs to 212 residues: Casparian strip membrane protein 1 (212 aa).

A disordered region spans residues 1-28 (MDSSNSTKETGDIPIPVTSSKSSKAAPP). The Cytoplasmic segment spans residues 1–49 (MDSSNSTKETGDIPIPVTSSKSSKAAPPPVVAAKAKSTTKQPLVSGWKR). A compositionally biased stretch (low complexity) spans 16-28 (PVTSSKSSKAAPP). The chain crosses the membrane as a helical span at residues 50–70 (GLGIIDFILRICAIAAALAAA). Residues 71 to 100 (TAMGTTSQQLPFFTQFFQFKADYNDLPAFT) are Extracellular-facing. The helical transmembrane segment at 101–121 (FFVIANAMAGAYLVLSLPFSI) threads the bilayer. The Cytoplasmic portion of the chain corresponds to 122–133 (LCIVRPHILGAR). The chain crosses the membrane as a helical span at residues 134 to 154 (LMLLVFDTVAVPLVTAAASAA). The Extracellular portion of the chain corresponds to 155-186 (ASIVYLAHNGNSDANWVAICRQFNDFCQRVSG). The helical transmembrane segment at 187-207 (AVVASFITALLFVVLVAVSAV) threads the bilayer. At 208 to 212 (ALRQK) the chain is on the cytoplasmic side.

This sequence belongs to the Casparian strip membrane proteins (CASP) family. As to quaternary structure, homodimer and heterodimers.

The protein resides in the cell membrane. In terms of biological role, regulates membrane-cell wall junctions and localized cell wall deposition. Required for establishment of the Casparian strip membrane domain (CSD) and the subsequent formation of Casparian strips, a cell wall modification of the root endodermis that determines an apoplastic barrier between the intraorganismal apoplasm and the extraorganismal apoplasm and prevents lateral diffusion. This chain is Casparian strip membrane protein 1, found in Helianthus annuus (Common sunflower).